Reading from the N-terminus, the 347-residue chain is Phosphoribosylformylglycinamidine cyclo-ligase (347 aa).

The protein belongs to the AIR synthase family.

It is found in the cytoplasm. The catalysed reaction is 2-formamido-N(1)-(5-O-phospho-beta-D-ribosyl)acetamidine + ATP = 5-amino-1-(5-phospho-beta-D-ribosyl)imidazole + ADP + phosphate + H(+). The protein operates within purine metabolism; IMP biosynthesis via de novo pathway; 5-amino-1-(5-phospho-D-ribosyl)imidazole from N(2)-formyl-N(1)-(5-phospho-D-ribosyl)glycinamide: step 2/2. The polypeptide is Phosphoribosylformylglycinamidine cyclo-ligase (Yersinia pseudotuberculosis serotype IB (strain PB1/+)).